A 142-amino-acid polypeptide reads, in one-letter code: Holo-[acyl-carrier-protein] synthase (142 aa).

D9 and E63 together coordinate Mg(2+).

It belongs to the P-Pant transferase superfamily. AcpS family. It depends on Mg(2+) as a cofactor.

The protein resides in the cytoplasm. The enzyme catalyses apo-[ACP] + CoA = holo-[ACP] + adenosine 3',5'-bisphosphate + H(+). Transfers the 4'-phosphopantetheine moiety from coenzyme A to a Ser of acyl-carrier-protein. The chain is Holo-[acyl-carrier-protein] synthase from Burkholderia lata (strain ATCC 17760 / DSM 23089 / LMG 22485 / NCIMB 9086 / R18194 / 383).